The following is a 228-amino-acid chain: U1 small nuclear ribonucleoprotein C (228 aa).

The Matrin-type; degenerate zinc finger occupies Ala11 to His43. The tract at residues Gly83–His127 is disordered. Residues Pro105–His127 show a composition bias toward pro residues.

The protein belongs to the U1 small nuclear ribonucleoprotein C family. As to quaternary structure, U1 snRNP is composed of the 7 core Sm proteins B/B', D1, D2, D3, E, F and G that assemble in a heptameric protein ring on the Sm site of the small nuclear RNA to form the core snRNP, and at least 3 U1 snRNP-specific proteins U1-70K, U1-A and U1-C. U1-C interacts with U1 snRNA and the 5' splice-site region of the pre-mRNA.

The protein localises to the nucleus. Functionally, component of the spliceosomal U1 snRNP, which is essential for recognition of the pre-mRNA 5' splice-site and the subsequent assembly of the spliceosome. U1-C is directly involved in initial 5' splice-site recognition for both constitutive and regulated alternative splicing. The interaction with the 5' splice-site seems to precede base-pairing between the pre-mRNA and the U1 snRNA. Stimulates commitment or early (E) complex formation by stabilizing the base pairing of the 5' end of the U1 snRNA and the 5' splice-site region. The sequence is that of U1 small nuclear ribonucleoprotein C from Batrachochytrium dendrobatidis (strain JAM81 / FGSC 10211) (Frog chytrid fungus).